Here is a 276-residue protein sequence, read N- to C-terminus: Natural cytotoxicity triggering receptor 2 (276 aa).

Positions 1–21 (MAWRALHPLLLLLLLFPGSQA) are cleaved as a signal peptide. The 99-residue stretch at 22-120 (QSKAQVLQSV…IYRPSDNSVS (99 aa)) folds into the Ig-like domain. Over 22 to 192 (QSKAQVLQSV…LRPGPAAPIA (171 aa)) the chain is Extracellular. Cystine bridges form between C40/C109 and C55/C63. Polar residues-rich tracts occupy residues 138-156 (TSWT…QSCV) and 167-183 (ESPS…NSTL). The interval 138–184 (TSWTPRDLVSSQTQTQSCVPPTAGARQAPESPSTIPVPSQPQNSTLR) is disordered. An N-linked (GlcNAc...) asparagine glycan is attached at N180. A helical transmembrane segment spans residues 193–213 (LVPVFCGLLVAKSLVLSALLV). Topologically, residues 214-276 (WWGDIWWKTM…ISDDDDEHTL (63 aa)) are cytoplasmic.

It belongs to the natural cytotoxicity receptor (NCR) family. As to quaternary structure, interacts with TYROBP/DAP12. Interacts with KMT2E isoform NKp44L. In terms of tissue distribution, selectively expressed by activated NK cells and by in vitro cultured (i.e. activated) TCRg/d lymphoid cells.

It is found in the cell membrane. Functionally, cytotoxicity-activating receptor that may contribute to the increased efficiency of activated natural killer (NK) cells to mediate tumor cell lysis. The protein is Natural cytotoxicity triggering receptor 2 (NCR2) of Homo sapiens (Human).